The following is a 325-amino-acid chain: ADP-L-glycero-D-manno-heptose-6-epimerase (325 aa).

NADP(+) contacts are provided by residues 10–11, 31–32, K38, and 75–79; these read FI, DD, and EGACS. Y139 (proton acceptor) is an active-site residue. K143 lines the NADP(+) pocket. N167 provides a ligand contact to substrate. The NADP(+) site is built by V168 and K176. K176 functions as the Proton acceptor in the catalytic mechanism. Substrate contacts are provided by residues S178, H185, 199 to 202, R212, and Y285; that span reads FEGS.

The protein belongs to the NAD(P)-dependent epimerase/dehydratase family. HldD subfamily. Homopentamer. NADP(+) is required as a cofactor.

The enzyme catalyses ADP-D-glycero-beta-D-manno-heptose = ADP-L-glycero-beta-D-manno-heptose. Its pathway is nucleotide-sugar biosynthesis; ADP-L-glycero-beta-D-manno-heptose biosynthesis; ADP-L-glycero-beta-D-manno-heptose from D-glycero-beta-D-manno-heptose 7-phosphate: step 4/4. Catalyzes the interconversion between ADP-D-glycero-beta-D-manno-heptose and ADP-L-glycero-beta-D-manno-heptose via an epimerization at carbon 6 of the heptose. The protein is ADP-L-glycero-D-manno-heptose-6-epimerase of Azoarcus sp. (strain BH72).